A 207-amino-acid chain; its full sequence is Putative threonylcarbamoyl-AMP synthase (207 aa).

The YrdC-like domain occupies 15 to 199 (EEERKKVLEF…KIISIREGVI (185 aa)).

Belongs to the SUA5 family.

The protein localises to the cytoplasm. The enzyme catalyses L-threonine + hydrogencarbonate + ATP = L-threonylcarbamoyladenylate + diphosphate + H2O. Its function is as follows. Required for the formation of a threonylcarbamoyl group on adenosine at position 37 (t(6)A37) in tRNAs that read codons beginning with adenine. Catalyzes the conversion of L-threonine, HCO(3)(-)/CO(2) and ATP to give threonylcarbamoyl-AMP (TC-AMP) as the acyladenylate intermediate, with the release of diphosphate. The polypeptide is Putative threonylcarbamoyl-AMP synthase (Methanocaldococcus jannaschii (strain ATCC 43067 / DSM 2661 / JAL-1 / JCM 10045 / NBRC 100440) (Methanococcus jannaschii)).